A 582-amino-acid polypeptide reads, in one-letter code: Putative transcriptional regulator HVO_1357 (582 aa).

Residues 19–129 (VVLVVDDDED…EVKETVEELL (111 aa)) enclose the Response regulatory domain. The residue at position 67 (Asp-67) is a 4-aspartylphosphate. Residues 165–203 (LSDLRSRLEAVRAEHEAAIRNREAQLDRLNRTNELLRDV) are a coiled coil. Positions 517-569 (LTDRQRTVLETSLVSGYFEWPRGSTAEEVADSLGISPPTLHEHLRTAERKLIE) constitute an HTH bat-type domain.

May be part of a signal-dependent gene regulation cascade that is relevant to swimming motility. May be involved in the transcription regulation of target genes. The sequence is that of Putative transcriptional regulator HVO_1357 from Haloferax volcanii (strain ATCC 29605 / DSM 3757 / JCM 8879 / NBRC 14742 / NCIMB 2012 / VKM B-1768 / DS2) (Halobacterium volcanii).